We begin with the raw amino-acid sequence, 648 residues long: Phosphomethylpyrimidine synthase (648 aa).

Substrate contacts are provided by residues Asn-236, Met-265, Tyr-294, His-330, 350–352, 391–394, and Glu-430; these read SRG and DGLR. Zn(2+) is bound at residue His-434. Tyr-457 provides a ligand contact to substrate. Residue His-498 participates in Zn(2+) binding. Positions 578, 581, and 586 each coordinate [4Fe-4S] cluster.

Belongs to the ThiC family. Homodimer. It depends on [4Fe-4S] cluster as a cofactor.

The enzyme catalyses 5-amino-1-(5-phospho-beta-D-ribosyl)imidazole + S-adenosyl-L-methionine = 4-amino-2-methyl-5-(phosphooxymethyl)pyrimidine + CO + 5'-deoxyadenosine + formate + L-methionine + 3 H(+). It participates in cofactor biosynthesis; thiamine diphosphate biosynthesis. Functionally, catalyzes the synthesis of the hydroxymethylpyrimidine phosphate (HMP-P) moiety of thiamine from aminoimidazole ribotide (AIR) in a radical S-adenosyl-L-methionine (SAM)-dependent reaction. The polypeptide is Phosphomethylpyrimidine synthase (Aliivibrio salmonicida (strain LFI1238) (Vibrio salmonicida (strain LFI1238))).